The primary structure comprises 136 residues: Small ribosomal subunit protein uS9 (136 aa).

It belongs to the universal ribosomal protein uS9 family.

This chain is Small ribosomal subunit protein uS9, found in Synechococcus sp. (strain JA-2-3B'a(2-13)) (Cyanobacteria bacterium Yellowstone B-Prime).